Consider the following 424-residue polypeptide: CinA-like protein (424 aa).

The protein belongs to the CinA family.

The sequence is that of CinA-like protein from Shewanella pealeana (strain ATCC 700345 / ANG-SQ1).